The sequence spans 328 residues: MSLIKIDQKAYEYNLRHIAKKIGSFQRLICVFKDNAYGHGAKLLAPLAKNLGVSFVAVKSEEEAREIEEFFENILILSHRPHGNENSRFIYALNDISQVKNYKQDIKIHLKIDTGMHRNGICVENLEHAIDLIRSSNLKLTGMFTHFASADEMDGSFFVQKENFQKAKKMVKKYFSNLLFHSHNSAALFRGKIPEDEYCRIGLVQFGYGDSNLKRILSLYAHRLSQRILQKGQSIGYGGIFTAVKDMEVATYDLGYADGLFRYNGKGELVLGNGKAMLGKMSMDSFSCENSGEEICVFKDADIWADFFHTINYEILVKLNPNIQRVLV.

K33 acts as the Proton acceptor; specific for D-alanine in catalysis. An N6-(pyridoxal phosphate)lysine modification is found at K33. R118 contacts substrate. The active-site Proton acceptor; specific for L-alanine is the Y237. Substrate is bound at residue M283.

It belongs to the alanine racemase family. Pyridoxal 5'-phosphate serves as cofactor.

It catalyses the reaction L-alanine = D-alanine. It functions in the pathway amino-acid biosynthesis; D-alanine biosynthesis; D-alanine from L-alanine: step 1/1. Catalyzes the interconversion of L-alanine and D-alanine. May also act on other amino acids. The chain is Alanine racemase (alr) from Campylobacter jejuni subsp. doylei (strain ATCC BAA-1458 / RM4099 / 269.97).